The primary structure comprises 279 residues: 2-dehydro-3-deoxyphosphooctonate aldolase (279 aa).

This sequence belongs to the KdsA family.

It is found in the cytoplasm. The catalysed reaction is D-arabinose 5-phosphate + phosphoenolpyruvate + H2O = 3-deoxy-alpha-D-manno-2-octulosonate-8-phosphate + phosphate. Its pathway is carbohydrate biosynthesis; 3-deoxy-D-manno-octulosonate biosynthesis; 3-deoxy-D-manno-octulosonate from D-ribulose 5-phosphate: step 2/3. It participates in bacterial outer membrane biogenesis; lipopolysaccharide biosynthesis. The polypeptide is 2-dehydro-3-deoxyphosphooctonate aldolase (Bartonella henselae (strain ATCC 49882 / DSM 28221 / CCUG 30454 / Houston 1) (Rochalimaea henselae)).